The following is a 210-amino-acid chain: SAP domain-containing ribonucleoprotein (210 aa).

Alanine 2 is modified (N-acetylalanine). The 35-residue stretch at 8 to 42 (LHKLKLAELKQECLARGLETKGIKQDLIHRLQAYL) folds into the SAP domain. At lysine 10 the chain carries N6-acetyllysine. Acidic residues predominate over residues 45–64 (HAEEEANEEDVLGDETEEEE). Positions 45-86 (HAEEEANEEDVLGDETEEEETKPIELPVKEEEPPEKTVDVAA) are disordered. Basic and acidic residues predominate over residues 65-86 (TKPIELPVKEEEPPEKTVDVAA). Lysine 142 carries the N6-acetyllysine modification. The disordered stretch occupies residues 161-210 (VSSISRKSEDDEKLKKRKERFGIVTSSAGTGTTEDTEAKKRKRAERFGIA). The residue at position 163 (serine 163) is a Phosphoserine. A compositionally biased stretch (polar residues) spans 184–193 (VTSSAGTGTT).

The protein belongs to the SAP domain-containing ribonucleoprotein family. Interacts with DDX39A. Interacts with FUS. Interacts (via the C-terminal domain) with DDX39B; the interaction is direct and facilitates RNA binding of DDX39B. Component of the transcription/export (TREX) complex at least composed of ALYREF/THOC4, DDX39B, SARNP/CIP29, CHTOP and the THO subcomplex; TREX seems to have dynamic structure involving ATP-dependent remodeling; in the complex interacts directly with DDX39B in a ATP-dependent manner which bridges it to ALYREF/THOC4. Low expression in spleen, liver, pancreas, testis, thymus, heart, and kidney. Increased levels are seen in hepatocellular carcinoma and pancreatic adenocarcinoma.

The protein localises to the nucleus. Its subcellular location is the nucleus speckle. Binds both single-stranded and double-stranded DNA with higher affinity for the single-stranded form. Specifically binds to scaffold/matrix attachment region DNA. Also binds single-stranded RNA. Enhances RNA unwinding activity of DDX39A. May participate in important transcriptional or translational control of cell growth, metabolism and carcinogenesis. Component of the TREX complex which is thought to couple mRNA transcription, processing and nuclear export, and specifically associates with spliced mRNA and not with unspliced pre-mRNA. The TREX complex is recruited to spliced mRNAs by a transcription-independent mechanism, binds to mRNA upstream of the exon-junction complex (EJC) and is recruited in a splicing- and cap-dependent manner to a region near the 5' end of the mRNA where it functions in mRNA export to the cytoplasm via the TAP/NXF1 pathway. Associates with DDX39B, which facilitates RNA binding of DDX39B and likely plays a role in mRNA export. This is SAP domain-containing ribonucleoprotein (SARNP) from Homo sapiens (Human).